Here is a 530-residue protein sequence, read N- to C-terminus: CTP synthase (530 aa).

An amidoligase domain region spans residues 1–267; the sequence is MTKYVFVTGG…DDFVLNHFKM (267 aa). Residue serine 13 coordinates CTP. Serine 13 contacts UTP. ATP is bound at residue 14 to 19; sequence SLGKGI. Tyrosine 54 lines the L-glutamine pocket. ATP is bound at residue aspartate 71. Aspartate 71 and glutamate 141 together coordinate Mg(2+). Residues 148–150, 188–193, and lysine 224 each bind CTP; these read DIE and KTKPTQ. UTP is bound by residues 188–193 and lysine 224; that span reads KTKPTQ. 240-242 is a binding site for ATP; it reads RDA. Positions 292-530 constitute a Glutamine amidotransferase type-1 domain; the sequence is KIALVGKYIE…LFKAFIGATM (239 aa). Glycine 354 is an L-glutamine binding site. Catalysis depends on cysteine 381, which acts as the Nucleophile; for glutamine hydrolysis. Residues 382–385, glutamate 405, and arginine 463 each bind L-glutamine; that span reads LGMQ. Residues histidine 508 and glutamate 510 contribute to the active site.

This sequence belongs to the CTP synthase family. Homotetramer.

It carries out the reaction UTP + L-glutamine + ATP + H2O = CTP + L-glutamate + ADP + phosphate + 2 H(+). The catalysed reaction is L-glutamine + H2O = L-glutamate + NH4(+). It catalyses the reaction UTP + NH4(+) + ATP = CTP + ADP + phosphate + 2 H(+). Its pathway is pyrimidine metabolism; CTP biosynthesis via de novo pathway; CTP from UDP: step 2/2. Its activity is regulated as follows. Allosterically activated by GTP, when glutamine is the substrate; GTP has no effect on the reaction when ammonia is the substrate. The allosteric effector GTP functions by stabilizing the protein conformation that binds the tetrahedral intermediate(s) formed during glutamine hydrolysis. Inhibited by the product CTP, via allosteric rather than competitive inhibition. Catalyzes the ATP-dependent amination of UTP to CTP with either L-glutamine or ammonia as the source of nitrogen. Regulates intracellular CTP levels through interactions with the four ribonucleotide triphosphates. The protein is CTP synthase of Latilactobacillus sakei subsp. sakei (strain 23K) (Lactobacillus sakei subsp. sakei).